Here is a 363-residue protein sequence, read N- to C-terminus: Phosphoserine aminotransferase (363 aa).

Arg-42 contributes to the L-glutamate binding site. Pyridoxal 5'-phosphate contacts are provided by residues 76–77, Trp-101, Thr-151, Asp-170, and Gln-193; that span reads AS. N6-(pyridoxal phosphate)lysine is present on Lys-194. A pyridoxal 5'-phosphate-binding site is contributed by 234-235; sequence NT.

Belongs to the class-V pyridoxal-phosphate-dependent aminotransferase family. SerC subfamily. In terms of assembly, homodimer. The cofactor is pyridoxal 5'-phosphate.

It localises to the cytoplasm. The catalysed reaction is O-phospho-L-serine + 2-oxoglutarate = 3-phosphooxypyruvate + L-glutamate. It carries out the reaction 4-(phosphooxy)-L-threonine + 2-oxoglutarate = (R)-3-hydroxy-2-oxo-4-phosphooxybutanoate + L-glutamate. It functions in the pathway amino-acid biosynthesis; L-serine biosynthesis; L-serine from 3-phospho-D-glycerate: step 2/3. In terms of biological role, catalyzes the reversible conversion of 3-phosphohydroxypyruvate to phosphoserine and of 3-hydroxy-2-oxo-4-phosphonooxybutanoate to phosphohydroxythreonine. This Listeria monocytogenes serotype 4b (strain F2365) protein is Phosphoserine aminotransferase.